The chain runs to 233 residues: Modulator of macroautophagy TMEM150B (233 aa).

Over 1–7 (MWGYLSL) the chain is Cytoplasmic. A helical membrane pass occupies residues 8-28 (MPVFLAVWAISGVWIVFAIAV). At 29-51 (TNRTVDLSKGFPYISICGSFPPQ) the chain is on the extracellular side. Asparagine 30 is a glycosylation site (N-linked (GlcNAc...) asparagine). A helical membrane pass occupies residues 52–72 (SCIFSQVLNMGAALAAWICIV). Over 73–84 (RYHQLRDWGVRR) the chain is Cytoplasmic. Residues 85-105 (WPNQLILWTGLLCALGTSVVG) traverse the membrane as a helical segment. At 106-116 (NFQEKNQRPTH) the chain is on the extracellular side. A helical membrane pass occupies residues 117–137 (LAGAFLAFILGNVYFWLQLLL). Topologically, residues 138–155 (WRLKRLPQPGAAWIGPLR) are cytoplasmic. Residues 156–176 (LGLCSVCTILIVAMIVLHACS) traverse the membrane as a helical segment. Residues 177–185 (LRSVSAACE) lie on the Extracellular side of the membrane. Residues 186-206 (WVVAMLLFALFGLLAVDFSAL) form a helical membrane-spanning segment. The Cytoplasmic portion of the chain corresponds to 207–233 (ESCTLCVQPWPSLSPPPASPISLPVQL).

It belongs to the DRAM/TMEM150 family. In terms of tissue distribution, highly expressed in the colon and lung with comparatively high levels also detectable in the lymph nodes, placenta, duodenum, peripheral blood mononuclear cells and spleen.

It is found in the cell membrane. Its subcellular location is the endosome membrane. It localises to the cytoplasmic vesicle. The protein resides in the autophagosome membrane. Functionally, modulator of macroautophagy that causes accumulation of autophagosomes under basal conditions and enhances autophagic flux. Represses cell death and promotes long-term clonogenic survival of cells grown in the absence of glucose in a macroautophagy-independent manner. May have some role in extracellular matrix engulfment or growth factor receptor recycling, both of which can modulate cell survival. The chain is Modulator of macroautophagy TMEM150B from Homo sapiens (Human).